The chain runs to 907 residues: DNA (cytosine-5)-methyltransferase CMT3 (907 aa).

Over residues 1–15 (MAPSSPSSAAAPTRT) the composition is skewed to low complexity. Positions 1–154 (MAPSSPSSAA…RNAATRRPDE (154 aa)) are disordered. A compositionally biased stretch (basic and acidic residues) spans 30-63 (ATDEPSTKRTRRPKAETKPRKKKDEVKEEEKPPM). Positions 64–89 (EDDACGEEPDAEEMALGEEAEAEEAE) are enriched in acidic residues. Composition is skewed to basic and acidic residues over residues 115–124 (HGSDGDHDPE) and 131–140 (PAKEARDKWP). Residues 172–297 (TLYCLHDDVY…VAYSTFANIP (126 aa)) form the BAH domain. A disordered region spans residues 303-323 (SGSDTASDISSDDVDSSKGKV). Positions 335 to 868 (ATLLDLYSGC…YSLGLAYQRE (534 aa)) constitute an SAM-dependent MTase C5-type domain. The 64-residue stretch at 437–500 (FVVEKLAGIC…EGYRRKILPL (64 aa)) folds into the Chromo domain. Residue Cys-513 is part of the active site.

This sequence belongs to the class I-like SAM-binding methyltransferase superfamily. C5-methyltransferase family.

The protein resides in the nucleus. The catalysed reaction is a 2'-deoxycytidine in DNA + S-adenosyl-L-methionine = a 5-methyl-2'-deoxycytidine in DNA + S-adenosyl-L-homocysteine + H(+). Involved in CpXpG DNA methylation. Plays a critical role in the maintenance of CpXpG DNA methylation and suppression of a wide spectrum of transposable element (TE) activities. Required for proper plant development in reproductive stage. This chain is DNA (cytosine-5)-methyltransferase CMT3, found in Oryza sativa subsp. japonica (Rice).